A 178-amino-acid chain; its full sequence is Inorganic pyrophosphatase (178 aa).

Positions 30, 44, and 56 each coordinate substrate. Residues aspartate 66, aspartate 71, and aspartate 103 each contribute to the Mg(2+) site. Tyrosine 142 contributes to the substrate binding site.

Belongs to the PPase family. Homohexamer. It depends on Mg(2+) as a cofactor.

Its subcellular location is the cytoplasm. It carries out the reaction diphosphate + H2O = 2 phosphate + H(+). In terms of biological role, catalyzes the hydrolysis of inorganic pyrophosphate (PPi) forming two phosphate ions. The polypeptide is Inorganic pyrophosphatase (Xanthomonas campestris pv. campestris (strain ATCC 33913 / DSM 3586 / NCPPB 528 / LMG 568 / P 25)).